We begin with the raw amino-acid sequence, 747 residues long: Elongation factor G, mitochondrial (747 aa).

A mitochondrion-targeting transit peptide spans 1 to 16; it reads MSLIMRVLNGNLSLRL. Residues 42 to 319 form the tr-type G domain; the sequence is ERIRNIGISA…AIIDYLPNPG (278 aa). GTP contacts are provided by residues 51–58, 118–122, and 172–175; these read AHIDSGKT, DTPGH, and NKLD.

This sequence belongs to the TRAFAC class translation factor GTPase superfamily. Classic translation factor GTPase family. EF-G/EF-2 subfamily.

The protein resides in the mitochondrion. It functions in the pathway protein biosynthesis; polypeptide chain elongation. Its function is as follows. Mitochondrial GTPase that catalyzes the GTP-dependent ribosomal translocation step during translation elongation. During this step, the ribosome changes from the pre-translocational (PRE) to the post-translocational (POST) state as the newly formed A-site-bound peptidyl-tRNA and P-site-bound deacylated tRNA move to the P and E sites, respectively. Catalyzes the coordinated movement of the two tRNA molecules, the mRNA and conformational changes in the ribosome. Essential during development as it acts as a retrograde signal from mitochondria to the nucleus to slow down cell proliferation if mitochondrial energy output is low. The chain is Elongation factor G, mitochondrial from Drosophila grimshawi (Hawaiian fruit fly).